We begin with the raw amino-acid sequence, 1108 residues long: MASNQIYTPPAFTLPDLVEIQRASFRWFLEEGLIEELESFSPITDYTGKIELHFLAKDYRLKEPKYSVDEAKRRDATYSMQMYVPTRLINKENGNIIDQDVFIGDLPLMTDRGTFIINGAERVIVNQIVRSPGVYYKSETDKNGRRTYNASLIPNRGAWLKFETDKNDLLWVRIDKTRKLSAHVLLKALGLTDSEILERLRHPEYYQKTVEKEGKFSEEEALIELYKKLRPGEPPTVSGGQQLLESRFFDPKRYDLGRVGRYKLNRKLQLNIPDSVRILTPEDILAAIDYLINLEFDLGTIDDIDHLGNRRVRSVGELLQNQVRVGLNRLERIIRERMTVSDTDSLTPTSLVNPKPLVAAIKEFFGSSQLSQFMDQTNPLAELTHKRRLSALGPGGLTRERAGFAVRDIHPSHYGRICPIETPEGPNAGLIGSLATHARVNEYGFIETPFYPVKDGRVLKDQPPIYMTADEEDDKRVAPGDVPTDENGYILGDVVPVRYRQDFTTTTPDQVDYVAVSPVQIISVATSLIPFLEHDDANRALMGSNMQRQAVPLLRPQRPLVGTGLEAQAARDSGMVILSQTNGVVSYVDANQIRVKTDNGPEITYTLQKYQRSNQDTCLNQRPIVFVGDRVQAGQVIADGSATEGGELALGQNILVAYMPWEGYNYEDAILISERLVQEDVYTSIHIEKYEIEARQTKLGPEEITREVPNVSEEALRQLDENGIIRIGAFVEAGDILVGKVTPKGESDQPPEEKLLRAIFGEKARDVRDNSLRVPNGEKGRVVDVRVFTREQGDELPPGANMVVRVYVAQKRKIQVGDKMAGRHGNKGIISRILPVEDMPFLPDGRPVDIVLNPLGVPSRMNVGQVYECLLGWAGACLGRRFKITPFDEMHGKEKSRETVHAKLQEARDVTGQDWVFNPENPGKMVVYDGRTGEPFDRPVTVGMAYMLKLVHLVDDKIHARSTGPYSLVTQQPLGGKAQQGGQRFGEMEVWALEAYGAAYILQELLTVKSDDMQGRNEALNAIVKGQSIPRPGTPESFKVLMRELQSLCLDISVRKASIPSFDDDGEMKPDPEVDLMVDVSPRRTPARPTIDYSALDDTDDKEGATTF.

Positions 1081–1108 (SPRRTPARPTIDYSALDDTDDKEGATTF) are disordered.

This sequence belongs to the RNA polymerase beta chain family. As to quaternary structure, in cyanobacteria the RNAP catalytic core is composed of 2 alpha, 1 beta, 1 beta', 1 gamma and 1 omega subunit. When a sigma factor is associated with the core the holoenzyme is formed, which can initiate transcription.

It catalyses the reaction RNA(n) + a ribonucleoside 5'-triphosphate = RNA(n+1) + diphosphate. Its function is as follows. DNA-dependent RNA polymerase catalyzes the transcription of DNA into RNA using the four ribonucleoside triphosphates as substrates. This Thermosynechococcus vestitus (strain NIES-2133 / IAM M-273 / BP-1) protein is DNA-directed RNA polymerase subunit beta.